A 205-amino-acid chain; its full sequence is Golgi to ER traffic protein 1 (205 aa).

Residues 1–3 (MDY) lie on the Lumenal side of the membrane. Residues 4–24 (WILLVLAFLVADKSWHLTGLL) traverse the membrane as a helical segment. The Cytoplasmic segment spans residues 25–96 (ATKLTSPERL…ATKARLAKLK (72 aa)). Positions 32-96 (ERLQQLIRER…ATKARLAKLK (65 aa)) form a coiled coil. A helical membrane pass occupies residues 97–117 (LLVVTVPFTALKFYKGKLPVY). Residues 118–156 (ALPKGMFPRFIEGTLEHGWLYMALAPLNMKQFSEGASVA) lie on the Lumenal side of the membrane. The chain crosses the membrane as a helical span at residues 157 to 173 (VSLGIWLFALLRVLGAI). Residues 174-205 (EFVLETLREQNPQVATETAKVHARTAQAASAN) are Cytoplasmic-facing.

Belongs to the WRB/GET1 family. In terms of assembly, component of the Golgi to ER traffic (GET) complex, which is composed of GET1, GET2 and GET3. Within the complex, GET1 and GET2 form a heterotetramer which is stabilized by phosphatidylinositol binding and which binds to the GET3 homodimer.

The protein localises to the endoplasmic reticulum membrane. It is found in the golgi apparatus membrane. In terms of biological role, required for the post-translational delivery of tail-anchored (TA) proteins to the endoplasmic reticulum. Together with GET2, acts as a membrane receptor for soluble GET3, which recognizes and selectively binds the transmembrane domain of TA proteins in the cytosol. The GET complex cooperates with the HDEL receptor ERD2 to mediate the ATP-dependent retrieval of resident ER proteins that contain a C-terminal H-D-E-L retention signal from the Golgi to the ER. This is Golgi to ER traffic protein 1 from Eremothecium gossypii (strain ATCC 10895 / CBS 109.51 / FGSC 9923 / NRRL Y-1056) (Yeast).